The chain runs to 698 residues: G1/S-specific cyclin CCN1 (698 aa).

A compositionally biased stretch (low complexity) spans 1–11 (MTSLQQQQQQQ). 5 disordered regions span residues 1-21 (MTSLQQQQQQQRVKYGPPHHI), 277-326 (QKKQ…DDED), 469-577 (DEDE…GSIL), 599-619 (SNSSNINIHHGHHNTKQEKRY), and 659-698 (NNTNSSSPLMNQQQQYYHQQQHQQQVTQSSLYQHHHQYHQ). Residues 277–302 (QKKQKKAFSSNSSRTTTASYTHQNQS) show a composition bias toward polar residues. Composition is skewed to acidic residues over residues 310–326 (DEDIDLDSGDEGDDDED) and 469–480 (DEDENVSTDDEA). Polar residues-rich tracts occupy residues 493–520 (DGNNQLFTPKSPNAFSSNSSLTLNNHPQ) and 528–567 (PSATSQYSLFSNKNNRTHESTSGLNSTCNTPTHISISSFA). Residues 659-669 (NNTNSSSPLMN) are compositionally biased toward polar residues. The span at 670 to 690 (QQQQYYHQQQHQQQVTQSSLY) shows a compositional bias: low complexity.

This sequence belongs to the cyclin family.

Essential for the control of the cell cycle at the G1/S (start) transition. Interacts with the CDC2 protein kinase to form MPF. This Candida albicans (strain WO-1) (Yeast) protein is G1/S-specific cyclin CCN1 (CCN1).